The chain runs to 201 residues: dTTP/UTP pyrophosphatase (201 aa).

Catalysis depends on Asp79, which acts as the Proton acceptor.

This sequence belongs to the Maf family. YhdE subfamily. A divalent metal cation serves as cofactor.

It localises to the cytoplasm. It catalyses the reaction dTTP + H2O = dTMP + diphosphate + H(+). It carries out the reaction UTP + H2O = UMP + diphosphate + H(+). Nucleoside triphosphate pyrophosphatase that hydrolyzes dTTP and UTP. May have a dual role in cell division arrest and in preventing the incorporation of modified nucleotides into cellular nucleic acids. This Hahella chejuensis (strain KCTC 2396) protein is dTTP/UTP pyrophosphatase.